Here is a 1197-residue protein sequence, read N- to C-terminus: Transient receptor potential cation channel subfamily A member 1 (1197 aa).

Topologically, residues 1–753 (MTSGDKETPK…KWNSYGKYFH (753 aa)) are cytoplasmic. ANK repeat units follow at residues 89–118 (KGRT…DFNA), 122–151 (AGNT…DTGV), 155–184 (KKQA…VIDI), 190–219 (HGRT…ACPR), 224–253 (NGYY…QRGC), 265–294 (EGNV…KIST), 298–327 (DLST…MEKR), 336–365 (QKMT…DINA), 369–398 (EHRS…CISV), 443–472 (MGCS…CINL), 476–505 (NNES…GSFI), 512–541 (AGMT…LLHR), 544–574 (TGRN…LLDQ), and 578–607 (DGNT…KLVY). Residues 754-774 (LANLLIYSIFLVFVTIYSSLM) traverse the membrane as a helical segment. Residues 775-827 (MNNIELKAGDNKTMSQYCNMGWEQLTMNLSQNPSVASQIRLDSCEERINRTTA) are Extracellular-facing. Residues N785, N802, and N823 are each glycosylated (N-linked (GlcNAc...) asparagine). Residues 828 to 848 (ILFCAVVIVVYILLNSMRELI) form a helical membrane-spanning segment. Topologically, residues 849-856 (QIYQQKLH) are cytoplasmic. The chain crosses the membrane as a helical span at residues 857–877 (YILETVNLISWVLYISALVMV). At 878-889 (TPAFQPDGGINT) the chain is on the extracellular side. Residues 890–910 (IHYSAASIAVFLSWFRLLLFL) form a helical membrane-spanning segment. Residues 911–932 (QRFDQVGIYVVMFLEILQTLIK) are Cytoplasmic-facing. The helical transmembrane segment at 933-953 (VLMVFSILIIAFGLAFYILLS) threads the bilayer. At 954 to 968 (KIIDPQPNHLSFSNI) the chain is on the extracellular side. Positions 969–989 (PMSLLRTFSMMLGELDFVGTY) form an intramembrane region, pore-forming. Over 990-1004 (VNTYYRDQLKVPMTS) the chain is Extracellular. The chain crosses the membrane as a helical span at residues 1005–1025 (FLILSVFMILMPILLMNLLIG). Over 1026-1197 (LAVGDIESVR…RAALSFNKSM (172 aa)) the chain is Cytoplasmic.

The protein belongs to the transient receptor (TC 1.A.4) family. As to quaternary structure, homotetramer.

The protein resides in the cell membrane. In terms of biological role, essential for thermotaxis by sensing environmental temperature. Receptor-activated non-selective cation channel involved in detection of sensations such as temperature. Involved in heat nociception by being activated by warm temperature of about 24-29 degrees Celsius. The protein is Transient receptor potential cation channel subfamily A member 1 (TrpA1) of Drosophila melanogaster (Fruit fly).